Here is a 185-residue protein sequence, read N- to C-terminus: Ribosome-recycling factor (185 aa).

This sequence belongs to the RRF family.

The protein localises to the cytoplasm. Its function is as follows. Responsible for the release of ribosomes from messenger RNA at the termination of protein biosynthesis. May increase the efficiency of translation by recycling ribosomes from one round of translation to another. This chain is Ribosome-recycling factor, found in Buchnera aphidicola subsp. Acyrthosiphon pisum (strain APS) (Acyrthosiphon pisum symbiotic bacterium).